We begin with the raw amino-acid sequence, 219 residues long: MSRISKAEMSKLLSVYFIMGSNNCTKDPLQVLREALEGGITIFQFREKGEGALTGEERICFAKELQAICKEYGVPFIVNDDVELALELDADGVHVGQDDEGITSVREKMGDKIVGVSTHTIEEARWAIENGADYLGVGPIFPTSTKKDTKAVQGTKGLAHFREQGITIPIVGIGGISIENTALVIEAGADGVSVISAISLAESAYESTKKLVEEVSRSL.

4-amino-2-methyl-5-(diphosphooxymethyl)pyrimidine contacts are provided by residues 44–48 and N79; that span reads QFREK. Positions 80 and 99 each coordinate Mg(2+). S117 is a binding site for 4-amino-2-methyl-5-(diphosphooxymethyl)pyrimidine. 143-145 contributes to the 2-[(2R,5Z)-2-carboxy-4-methylthiazol-5(2H)-ylidene]ethyl phosphate binding site; that stretch reads TST. Residue K146 coordinates 4-amino-2-methyl-5-(diphosphooxymethyl)pyrimidine. 2-[(2R,5Z)-2-carboxy-4-methylthiazol-5(2H)-ylidene]ethyl phosphate-binding positions include G175 and 195–196; that span reads IS.

Belongs to the thiamine-phosphate synthase family. It depends on Mg(2+) as a cofactor.

The enzyme catalyses 2-[(2R,5Z)-2-carboxy-4-methylthiazol-5(2H)-ylidene]ethyl phosphate + 4-amino-2-methyl-5-(diphosphooxymethyl)pyrimidine + 2 H(+) = thiamine phosphate + CO2 + diphosphate. It catalyses the reaction 2-(2-carboxy-4-methylthiazol-5-yl)ethyl phosphate + 4-amino-2-methyl-5-(diphosphooxymethyl)pyrimidine + 2 H(+) = thiamine phosphate + CO2 + diphosphate. It carries out the reaction 4-methyl-5-(2-phosphooxyethyl)-thiazole + 4-amino-2-methyl-5-(diphosphooxymethyl)pyrimidine + H(+) = thiamine phosphate + diphosphate. It functions in the pathway cofactor biosynthesis; thiamine diphosphate biosynthesis; thiamine phosphate from 4-amino-2-methyl-5-diphosphomethylpyrimidine and 4-methyl-5-(2-phosphoethyl)-thiazole: step 1/1. Its function is as follows. Condenses 4-methyl-5-(beta-hydroxyethyl)thiazole monophosphate (THZ-P) and 2-methyl-4-amino-5-hydroxymethyl pyrimidine pyrophosphate (HMP-PP) to form thiamine monophosphate (TMP). The sequence is that of Thiamine-phosphate synthase from Bacillus thuringiensis subsp. konkukian (strain 97-27).